A 587-amino-acid polypeptide reads, in one-letter code: Zinc finger protein 69 (587 aa).

A disordered region spans residues 42 to 128; it reads NGTQQESLAD…TPGTTAAGSQ (87 aa). The 72-residue stretch at 76–147 folds into the KRAB domain; sequence HDEATPGTPA…VDLSQEEWGQ (72 aa). C2H2-type zinc fingers lie at residues 271–293, 299–321, 327–349, 355–377, 383–405, 411–433, 439–461, 467–489, and 495–517; these read HKKK…ILEQ, KPAR…CMRA, NVCE…HTGE, KECG…HTGE, EECG…HTGE, DKCQ…HSGE, SECG…HTGE, TSCC…HTGE, and KECG…HTGV. The disordered stretch occupies residues 564–587; it reads SRHQKIHRRNTFRDDPGHENKRQL. Residues 574 to 587 show a composition bias toward basic and acidic residues; it reads TFRDDPGHENKRQL.

It belongs to the krueppel C2H2-type zinc-finger protein family.

It localises to the nucleus. In terms of biological role, putative transcription factor that appears to regulate lipid metabolism. The polypeptide is Zinc finger protein 69 (Mus musculus (Mouse)).